A 319-amino-acid polypeptide reads, in one-letter code: MKRIGVLTSGGDSPGMNAAIRAVVRKAIYHGVEVFGIYYGYAGLIAGKIKKLEVGDVGDIIHRGGTILYTARCPEFKTEEGQLKGIEQLKKHGIEGLVVIGGDGSYQGAKKLTEHGFPCVGVPGTIDNDIPGTDFTIGFDTALNTVIDAIDKIRDTATSHERTYVIEVMGRHAGDIALWSGLAGGAETILIPEADYDMNDVIARLKRGHERGKKHSIIIVAEGVGSGVEFGKKIQEATGFETRVTVLGHVQRGGSPTAFDRVLASRLGARAVELLLEGKGGRCVGIQNNQLVDHDIVEALANKHTVDQKMYLLSKELSI.

G11 lines the ATP pocket. ADP is bound at residue 21–25; it reads RAVVR. Residues 72 to 73 and 102 to 105 each bind ATP; these read RC and GDGS. D103 lines the Mg(2+) pocket. A substrate-binding site is contributed by 125–127; sequence TID. D127 serves as the catalytic Proton acceptor. Residue R154 coordinates ADP. Residues R162 and 169 to 171 contribute to the substrate site; that span reads MGR. Residues 185-187, R211, and 213-215 contribute to the ADP site; these read GAE and KKH. Substrate-binding positions include E222, R243, and 249–252; that span reads HVQR.

This sequence belongs to the phosphofructokinase type A (PFKA) family. ATP-dependent PFK group I subfamily. Prokaryotic clade 'B1' sub-subfamily. Homotetramer. Mg(2+) is required as a cofactor.

The protein localises to the cytoplasm. It carries out the reaction beta-D-fructose 6-phosphate + ATP = beta-D-fructose 1,6-bisphosphate + ADP + H(+). It functions in the pathway carbohydrate degradation; glycolysis; D-glyceraldehyde 3-phosphate and glycerone phosphate from D-glucose: step 3/4. Its activity is regulated as follows. Allosterically activated by ADP and other diphosphonucleosides, and allosterically inhibited by phosphoenolpyruvate. Its function is as follows. Catalyzes the phosphorylation of D-fructose 6-phosphate to fructose 1,6-bisphosphate by ATP, the first committing step of glycolysis. The chain is ATP-dependent 6-phosphofructokinase from Geobacillus sp. (strain WCH70).